Here is a 258-residue protein sequence, read N- to C-terminus: Imidazole glycerol phosphate synthase subunit HisF (258 aa).

Catalysis depends on residues aspartate 11 and aspartate 130.

This sequence belongs to the HisA/HisF family. Heterodimer of HisH and HisF.

Its subcellular location is the cytoplasm. It carries out the reaction 5-[(5-phospho-1-deoxy-D-ribulos-1-ylimino)methylamino]-1-(5-phospho-beta-D-ribosyl)imidazole-4-carboxamide + L-glutamine = D-erythro-1-(imidazol-4-yl)glycerol 3-phosphate + 5-amino-1-(5-phospho-beta-D-ribosyl)imidazole-4-carboxamide + L-glutamate + H(+). It functions in the pathway amino-acid biosynthesis; L-histidine biosynthesis; L-histidine from 5-phospho-alpha-D-ribose 1-diphosphate: step 5/9. Functionally, IGPS catalyzes the conversion of PRFAR and glutamine to IGP, AICAR and glutamate. The HisF subunit catalyzes the cyclization activity that produces IGP and AICAR from PRFAR using the ammonia provided by the HisH subunit. This is Imidazole glycerol phosphate synthase subunit HisF from Shigella boydii serotype 4 (strain Sb227).